Here is a 173-residue protein sequence, read N- to C-terminus: Mesogenin-1 (173 aa).

Polar residues predominate over residues Glu39–Thr68. Disordered stretches follow at residues Glu39 to Gly69 and Thr96 to Arg117. Residues Asp99–Ala114 show a composition bias toward basic residues. The bHLH domain maps to His109–Leu163.

The protein localises to the nucleus. Involved in specifying the paraxial, but not dorsal, mesoderm. May regulate the expression of T-box transcription factors required for mesoderm formation and differentiation, such as brachyury T, wnt8, vegt and eomes. The sequence is that of Mesogenin-1 (msgn1) from Xenopus laevis (African clawed frog).